A 577-amino-acid chain; its full sequence is Arginine--tRNA ligase (577 aa).

The 'HIGH' region motif lies at 132–142; sequence ANPTGPLHVGH.

The protein belongs to the class-I aminoacyl-tRNA synthetase family. As to quaternary structure, monomer.

Its subcellular location is the cytoplasm. It carries out the reaction tRNA(Arg) + L-arginine + ATP = L-arginyl-tRNA(Arg) + AMP + diphosphate. This Herminiimonas arsenicoxydans protein is Arginine--tRNA ligase.